The primary structure comprises 574 residues: Sulfate adenylyltransferase (574 aa).

The interval 1–169 (MANSPHGGVL…IEAVNKLNHY (169 aa)) is N-terminal. Positions 170–394 (DYVALRYSPA…LRESSPPRAT (225 aa)) are catalytic. A sulfate-binding site is contributed by Gln-197. ATP contacts are provided by residues 197-200 (QTRN) and 291-294 (GRDH). Active-site residues include Thr-198, Arg-199, and Asn-200. Arg-199 provides a ligand contact to sulfate. Position 295 (Ala-295) interacts with sulfate. Val-333 serves as a coordination point for ATP. The segment at 395–574 (QGFTIFLTGY…LESEGYFDRL (180 aa)) is allosteric regulation domain; adenylyl-sulfate kinase-like. 3'-phosphoadenylyl sulfate-binding positions include 434–437 (DTVR), Arg-451, 477–478 (IA), and Arg-516.

The protein in the N-terminal section; belongs to the sulfate adenylyltransferase family. In the C-terminal section; belongs to the APS kinase family. As to quaternary structure, homohexamer. Dimer of trimers.

The protein localises to the cytoplasm. It carries out the reaction sulfate + ATP + H(+) = adenosine 5'-phosphosulfate + diphosphate. It functions in the pathway sulfur metabolism; hydrogen sulfide biosynthesis; sulfite from sulfate: step 1/3. With respect to regulation, allosterically inhibited by 3'-phosphoadenosine 5'-phosphosulfate (PAPS). In terms of biological role, catalyzes the first intracellular reaction of sulfate assimilation, forming adenosine-5'-phosphosulfate (APS) from inorganic sulfate and ATP. Plays an important role in sulfate activation as a component of the biosynthesis pathway of sulfur-containing amino acids. In Aspergillus terreus (strain NIH 2624 / FGSC A1156), this protein is Sulfate adenylyltransferase.